A 425-amino-acid polypeptide reads, in one-letter code: Formyl-CoA:oxalate CoA-transferase (425 aa).

CoA-binding positions include 17-18, R38, 72-75, 96-98, R104, and 136-139; these read QS, LDTK, NFG, and KVYE. D168 serves as the catalytic Nucleophile. Position 247–249 (247–249) interacts with substrate; it reads GGQ.

The protein belongs to the CoA-transferase III family. Frc subfamily. In terms of assembly, homodimer.

The enzyme catalyses formyl-CoA + oxalate = oxalyl-CoA + formate. The protein operates within metabolic intermediate degradation; oxalate degradation; CO(2) and formate from oxalate: step 1/2. Its function is as follows. Involved in the catabolism of oxalate and in the adapatation to low pH via the induction of the oxalate-dependent acid tolerance response (ATR). Catalyzes the transfer of the CoA moiety from formyl-CoA to oxalate. The polypeptide is Formyl-CoA:oxalate CoA-transferase (Rhodopseudomonas palustris (strain BisA53)).